An 89-amino-acid chain; its full sequence is Small ribosomal subunit protein uS15 (89 aa).

This sequence belongs to the universal ribosomal protein uS15 family. As to quaternary structure, part of the 30S ribosomal subunit. Forms a bridge to the 50S subunit in the 70S ribosome, contacting the 23S rRNA.

One of the primary rRNA binding proteins, it binds directly to 16S rRNA where it helps nucleate assembly of the platform of the 30S subunit by binding and bridging several RNA helices of the 16S rRNA. In terms of biological role, forms an intersubunit bridge (bridge B4) with the 23S rRNA of the 50S subunit in the ribosome. This is Small ribosomal subunit protein uS15 from Bifidobacterium longum (strain DJO10A).